The chain runs to 196 residues: MAFKDWMNNLRDYFVEDDEEFNEPARPVQESRPTVASTPKPKVEERKAQPEYQTRRPAQSTSKAQTQTAAPKRAGSTFTKPMPEKIVQQQTVSQSQSVAATVSTIAIKEPRAYADIMESARIVKNGECVLVNFKFMGDAQARRSIDFMTGVVFTLDGDIQNVGGQIFLMTPANITVDAAKEMSILAGQNFESYDIY.

The interval Glu-16–Pro-81 is disordered. The span at Arg-56–Ala-69 shows a compositional bias: polar residues.

Belongs to the SepF family. In terms of assembly, homodimer. Interacts with FtsZ.

Its subcellular location is the cytoplasm. Functionally, cell division protein that is part of the divisome complex and is recruited early to the Z-ring. Probably stimulates Z-ring formation, perhaps through the cross-linking of FtsZ protofilaments. Its function overlaps with FtsA. The chain is Cell division protein SepF from Lactococcus lactis subsp. lactis (strain IL1403) (Streptococcus lactis).